The chain runs to 104 residues: ATP-dependent Clp protease adapter protein ClpS (104 aa).

This sequence belongs to the ClpS family. As to quaternary structure, binds to the N-terminal domain of the chaperone ClpA.

In terms of biological role, involved in the modulation of the specificity of the ClpAP-mediated ATP-dependent protein degradation. The protein is ATP-dependent Clp protease adapter protein ClpS of Burkholderia mallei (strain NCTC 10247).